A 360-amino-acid polypeptide reads, in one-letter code: MEAARGRLGPEQDLSTGADHQAVTFSGRPSRTLSKPPSARTLSGEEEAESVGVASRHPRPSPKTSSGSIAHRPELDTWEDKPSARATPSGARGSRGTSGSEHTPPPSSWYPEPEPSEDQPSALTVCRRGSPGGVEMNVELPQQEGDDDDDGDDEEAADRAGHSFPSRLQDSRSLDGLSGACGGGGSSSSGEAGAGGGRRATISSPLELEGTVSRHGDLTHFVANNLQLKIRLSGAPSPVPPASGRPCLTPAPTPTIPPIDPDVLRDLERLSRELGGRVDRLLCGLGGAVQELTALSVGCIQTYRDAVDSLGEAVDMSIKGMYTLLARCEELERALQPVQGLARQVRDIRRTLEVLEALCK.

Residues 1–10 (MEAARGRLGP) show a composition bias toward basic and acidic residues. A disordered region spans residues 1 to 201 (MEAARGRLGP…AGAGGGRRAT (201 aa)). Polar residues predominate over residues 23–35 (VTFSGRPSRTLSK). Threonine 41 is modified (phosphothreonine). Over residues 71–83 (HRPELDTWEDKPS) the composition is skewed to basic and acidic residues. Low complexity predominate over residues 89–100 (SGARGSRGTSGS). Position 130 is a phosphoserine (serine 130). Residues 144-156 (EGDDDDDGDDEEA) are compositionally biased toward acidic residues. Position 173 is a phosphoserine (serine 173). Residues 179 to 198 (GACGGGGSSSSGEAGAGGGR) are compositionally biased toward gly residues. A Phosphothreonine modification is found at threonine 201. Serine 204 is modified (phosphoserine).

It belongs to the BORCS6 family. As to quaternary structure, component of the BLOC-one-related complex (BORC) which is composed of BLOC1S1, BLOC1S2, BORCS5, BORCS6, BORCS7, BORCS8, KXD1 and SNAPIN.

The protein resides in the lysosome membrane. Its function is as follows. As part of the BORC complex may play a role in lysosomes movement and localization at the cell periphery. Associated with the cytosolic face of lysosomes, the BORC complex may recruit ARL8B and couple lysosomes to microtubule plus-end-directed kinesin motor. In Rattus norvegicus (Rat), this protein is BLOC-1-related complex subunit 6.